The sequence spans 607 residues: Guanine nucleotide-binding protein-like 1 (607 aa).

The span at 1 to 14 shows a compositional bias: basic residues; that stretch reads MPRKKPFSVKQKKK. The disordered stretch occupies residues 1-81; the sequence is MPRKKPFSVK…GPRGYDPNRY (81 aa). Residues 15 to 26 show a composition bias toward basic and acidic residues; the sequence is QLQDKRERKRGL. 3 positions are modified to phosphoserine: Ser-32, Ser-33, and Ser-34. Phosphothreonine occurs at positions 48 and 50. A phosphoserine mark is found at Ser-51 and Ser-68. A CP-type G domain is found at 178–418; that stretch reads WRQLWRVLEM…LCDCPGLIFP (241 aa). GTP is bound at residue 225–228; it reads NKVD. Ser-324 bears the Phosphoserine mark. GTP contacts are provided by residues 367 to 374 and 411 to 415; these read GFPNVGKS and DCPGL. A disordered region spans residues 547-607; that stretch reads GPAGDEEEEE…PYALLGEDEC (61 aa). Residues 550-584 show a composition bias toward acidic residues; sequence GDEEEEEEEELSSSCEEEGEEDRDADEEGEGDEET. Phosphoserine occurs at positions 561, 562, and 563.

This sequence belongs to the TRAFAC class YlqF/YawG GTPase family.

Its function is as follows. Possible regulatory or functional link with the histocompatibility cluster. The polypeptide is Guanine nucleotide-binding protein-like 1 (GNL1) (Homo sapiens (Human)).